Here is a 450-residue protein sequence, read N- to C-terminus: WD repeat-containing protein ATCSA-1 (450 aa).

WD repeat units follow at residues 41–81 (PHRG…DYEA), 101–141 (GHKY…AVVD), 148–185 (VYRT…FSHT), and 188–228 (GHRD…CFRV). The interval 269–298 (LQSKQTGSQSVKGSSSAKASVEKSRQKRIH) is disordered. The segment covering 271–287 (SKQTGSQSVKGSSSAKA) has biased composition (low complexity). WD repeat units lie at residues 310 to 349 (AHYG…NTLV) and 397 to 436 (GHYE…EDEM).

Interacts with DDB1A. Expressed in roots, leaves, stems, flowers and siliques.

It is found in the nucleus. Its function is as follows. Involved in UV-B tolerance and genome integrity. In association with DDB2, is necessary for repair of UV-B-induced DNA lesions. The polypeptide is WD repeat-containing protein ATCSA-1 (Arabidopsis thaliana (Mouse-ear cress)).